The chain runs to 136 residues: Histone H3, embryonic (136 aa).

The segment at methionine 1–arginine 43 is disordered. Lysine 5 carries the post-translational modification N6-methylated lysine. Lysine 10 is modified (N6-acetyllysine; alternate). Lysine 10 is modified (N6-methylated lysine; alternate). Serine 11 is modified (phosphoserine). Residues lysine 15 and lysine 24 each carry the N6-acetyllysine modification. N6-methylated lysine occurs at positions 28, 37, and 80.

Belongs to the histone H3 family. In terms of assembly, the nucleosome is a histone octamer containing two molecules each of H2A, H2B, H3 and H4 assembled in one H3-H4 heterotetramer and two H2A-H2B heterodimers. The octamer wraps approximately 147 bp of DNA. Acetylation is generally linked to gene activation. In terms of processing, methylation at Lys-5 is linked to gene activation. Methylation at Lys-10 is linked to gene repression.

It localises to the nucleus. Its subcellular location is the chromosome. Functionally, core component of nucleosome. Nucleosomes wrap and compact DNA into chromatin, limiting DNA accessibility to the cellular machineries which require DNA as a template. Histones thereby play a central role in transcription regulation, DNA repair, DNA replication and chromosomal stability. DNA accessibility is regulated via a complex set of post-translational modifications of histones, also called histone code, and nucleosome remodeling. In Paracentrotus lividus (Common sea urchin), this protein is Histone H3, embryonic.